We begin with the raw amino-acid sequence, 560 residues long: MNINVADLLNGNYILLLFVVLALGLCLGKLRLGSVQLGNSIGVLVVSLLLGQQHFSINTDALNLGFMLFIFCVGVEAGPNFFSIFFRDGKNYLMLALVMVGSALLIALGLGRAFGWDIGLTAGMLAGSMTSTPVLVGAGDTLRHAGMEGAQLAQALDHLSLGYALTYLIGLVSLIFGARYLPKLQHQDLQTSAQQIARERGLDTDANRKVYLPVIRAYRVGPELVAWADGKNLRELGIYRQTGCYIERIRRNGILASPDGDAVLQMGDEIALVGYPDAHARLDPSFRNGKEVFDRDLLDMRIVTEEIVVKNHNVVGRRLGQLKLTDHGCFLNRVIRSQIEMPIDDNIVLNKGDVLQVSGDARRVKTIADRIGFISIHSQVTDLLAFCAFFIVGLMIGMITFQFSSFSFGIGNAAGLLFAGIMLGFLRANHPTFGYIPQGALMMVKEFGLMVFMAGVGLSAGSGIGHGLGAVGGQMLFAGLIVSLLPVVICFLFGAYVLRMNRALLFGAMMGARTCAPAMEIISDTARSNIPALGYAGTYAIANVLLTLAGTLIVIIWPGT.

The next 5 helical transmembrane spans lie at 8-28, 32-52, 66-86, 91-111, and 158-178; these read LLNGNYILLLFVVLALGLCLG, LGSVQLGNSIGVLVVSLLLGQ, FMLFIFCVGVEAGPNFFSIFF, NYLMLALVMVGSALLIALGLG, and HLSLGYALTYLIGLVSLIFGA. 2 consecutive RCK C-terminal domains span residues 200–288 and 292–373; these read RGLD…SFRN and VFDR…RIGF. The next 5 helical transmembrane spans lie at 383–403, 406–426, 447–467, 475–495, and 539–559; these read LLAFCAFFIVGLMIGMITFQF, FSFGIGNAAGLLFAGIMLGFL, FGLMVFMAGVGLSAGSGIGHG, MLFAGLIVSLLPVVICFLFGA, and YAIANVLLTLAGTLIVIIWPG.

It belongs to the AAE transporter (TC 2.A.81) family. YbjL subfamily.

Its subcellular location is the cell membrane. In Cronobacter sakazakii (strain ATCC BAA-894) (Enterobacter sakazakii), this protein is Putative transport protein ESA_02488.